The primary structure comprises 89 residues: Probable oxaloacetate decarboxylase gamma chain (89 aa).

The chain crosses the membrane as a helical span at residues 13–33 (LMLSGMGFVITFLLILIWAIT).

This sequence belongs to the OadG family. Heterotrimer of an alpha, a beta and a gamma subunit. Na(+) serves as cofactor.

It localises to the cell membrane. It catalyses the reaction oxaloacetate + 2 Na(+)(in) + H(+) = pyruvate + 2 Na(+)(out) + CO2. Catalyzes the decarboxylation of oxaloacetate coupled to Na(+) translocation. This Actinobacillus succinogenes (strain ATCC 55618 / DSM 22257 / CCUG 43843 / 130Z) protein is Probable oxaloacetate decarboxylase gamma chain.